We begin with the raw amino-acid sequence, 482 residues long: ATP synthase subunit beta (482 aa).

161–168 (GGAGVGKT) is a binding site for ATP.

Belongs to the ATPase alpha/beta chains family. F-type ATPases have 2 components, CF(1) - the catalytic core - and CF(0) - the membrane proton channel. CF(1) has five subunits: alpha(3), beta(3), gamma(1), delta(1), epsilon(1). CF(0) has three main subunits: a(1), b(2) and c(9-12). The alpha and beta chains form an alternating ring which encloses part of the gamma chain. CF(1) is attached to CF(0) by a central stalk formed by the gamma and epsilon chains, while a peripheral stalk is formed by the delta and b chains.

Its subcellular location is the cell inner membrane. The catalysed reaction is ATP + H2O + 4 H(+)(in) = ADP + phosphate + 5 H(+)(out). Produces ATP from ADP in the presence of a proton gradient across the membrane. The catalytic sites are hosted primarily by the beta subunits. The protein is ATP synthase subunit beta of Anaeromyxobacter dehalogenans (strain 2CP-C).